Here is a 151-residue protein sequence, read N- to C-terminus: Mitochondrial intermembrane space import and assembly protein 40 homolog (151 aa).

Positions 1-35 (MGQGLSQPAQAVEEPSPPAVEAAPSSSPSPAPAPS) are disordered. The span at 7-26 (QPAQAVEEPSPPAVEAAPSS) shows a compositional bias: low complexity. Disulfide bonds link cysteine 65-cysteine 67, cysteine 76-cysteine 109, and cysteine 86-cysteine 99. One can recognise a CHCH domain in the interval 73–117 (NGPCGSQFVDAFSCFLKSTEEEKGSDCVKPFIALQDCIKINPEAF). 2 consecutive short sequence motifs (cx9C motif) follow at residues 76–86 (CGSQFVDAFSC) and 99–109 (CVKPFIALQDC). Residues 123–151 (EEEENDEEAEKSNLKVRAPAWSRESKPKL) are disordered.

It localises to the mitochondrion intermembrane space. The protein localises to the peroxisome matrix. In terms of biological role, required for the import and folding of small cysteine-containing proteins in the mitochondrial intermembrane space. This chain is Mitochondrial intermembrane space import and assembly protein 40 homolog, found in Oryza sativa subsp. japonica (Rice).